Reading from the N-terminus, the 500-residue chain is Dipeptide and tripeptide permease A (500 aa).

Over methionine 1–lysine 21 the chain is Cytoplasmic. The helical transmembrane segment at alanine 22–methionine 44 threads the bilayer. The Periplasmic segment spans residues alanine 45–serine 59. A helical membrane pass occupies residues isoleucine 60 to leucine 80. At glycine 81–arginine 89 the chain is on the cytoplasmic side. Residues valine 90–histidine 110 form a helical membrane-spanning segment. Position 111 (aspartate 111) is a topological domain, periplasmic. Residues alanine 112–asparagine 132 traverse the membrane as a helical segment. Residues proline 133–threonine 153 lie on the Cytoplasmic side of the membrane. The chain crosses the membrane as a helical span at residues methionine 154–alanine 174. The Periplasmic portion of the chain corresponds to alanine 175–glycine 178. Residues tryptophan 179–phenylalanine 199 traverse the membrane as a helical segment. Residues cysteine 200–arginine 219 are Cytoplasmic-facing. The chain crosses the membrane as a helical span at residues asparagine 220 to histidine 240. The Periplasmic segment spans residues asparagine 241–arginine 246. A helical membrane pass occupies residues methionine 247–methionine 267. The Cytoplasmic segment spans residues lysine 268–lysine 274. A helical transmembrane segment spans residues methionine 275–methionine 295. Residues proline 296 to glutamine 320 lie on the Periplasmic side of the membrane. A helical membrane pass occupies residues tyrosine 321–asparagine 341. At lysine 342 to lysine 352 the chain is on the cytoplasmic side. Residues phenylalanine 353–phenylalanine 373 form a helical membrane-spanning segment. Residues alanine 374 to glycine 378 lie on the Periplasmic side of the membrane. Residues isoleucine 379–isoleucine 399 traverse the membrane as a helical segment. Topologically, residues serine 400–arginine 414 are cytoplasmic. A helical transmembrane segment spans residues leucine 415–glycine 435. The Periplasmic segment spans residues tyrosine 436 to arginine 459. The helical transmembrane segment at valine 460–proline 480 threads the bilayer. Residues lysine 481–alanine 500 are Cytoplasmic-facing.

The protein belongs to the major facilitator superfamily. Proton-dependent oligopeptide transporter (POT/PTR) (TC 2.A.17) family. DtpA subfamily. In terms of assembly, monomer. Has a crown-like structure with a diameter of 8 nm and a central density.

The protein localises to the cell inner membrane. Functionally, proton-dependent permease that transports di- and tripeptides as well as structurally related peptidomimetics such as aminocephalosporins into the cell. Has a clear preference for dipeptides and tripeptides composed of L-amino acids, and discriminates dipeptides on the basis of the position of charges within the substrate. The protein is Dipeptide and tripeptide permease A (dtpA) of Escherichia coli (strain K12).